Consider the following 254-residue polypeptide: UPF0246 protein FTM_0239 (254 aa).

Belongs to the UPF0246 family.

The polypeptide is UPF0246 protein FTM_0239 (Francisella tularensis subsp. mediasiatica (strain FSC147)).